Here is a 523-residue protein sequence, read N- to C-terminus: GMP synthase [glutamine-hydrolyzing] (523 aa).

The region spanning 8 to 205 (RILILDFGSQ…IRELCECEAL (198 aa)) is the Glutamine amidotransferase type-1 domain. The active-site Nucleophile is the Cys85. Catalysis depends on residues His179 and Glu181. Positions 206–398 (WTPSNIISDA…LGLPYDMVYR (193 aa)) constitute a GMPS ATP-PPase domain. Position 233 to 239 (233 to 239 (SGGVDSS)) interacts with ATP.

Homodimer.

The enzyme catalyses XMP + L-glutamine + ATP + H2O = GMP + L-glutamate + AMP + diphosphate + 2 H(+). The protein operates within purine metabolism; GMP biosynthesis; GMP from XMP (L-Gln route): step 1/1. Catalyzes the synthesis of GMP from XMP. This Alcanivorax borkumensis (strain ATCC 700651 / DSM 11573 / NCIMB 13689 / SK2) protein is GMP synthase [glutamine-hydrolyzing].